A 545-amino-acid chain; its full sequence is 2-oxo-Delta(3)-4,5,5-trimethylcyclopentenylacetyl-CoA monooxygenase (545 aa).

Residues T20, E39, 47–50, 59–60, Y65, and V112 each bind FAD; these read TWYW and DT. 57-59 provides a ligand contact to NADP(+); sequence RLD. Residues 193 to 199 and 216 to 217 each bind NADP(+); these read TGATGVQ and RT. Residue V446 participates in FAD binding. W501 serves as a coordination point for NADP(+).

This sequence belongs to the FAD-binding monooxygenase family. As to quaternary structure, homodimer. FAD serves as cofactor.

The enzyme catalyses [(1R)-2,2,3-trimethyl-5-oxocyclopent-3-enyl]acetyl-CoA + NADPH + O2 + H(+) = [(2R)-3,3,4-trimethyl-6-oxo-3,6-dihydro-1H-pyran-2-yl]acetyl-CoA + NADP(+) + H2O. It participates in terpene metabolism; (R)-camphor degradation. Its function is as follows. Involved in the degradation of (+)-camphor. Catalyzes the lactonization of 2-oxo-delta(3)-4,5, 5-trimethylcyclopentenylacetyl-CoA (OT-CoA), a key intermediate in the metabolism of camphor. 2-Oxocyclopentyl ethyl acetate is also a good substrate, as is 2-oxocyclohexyl ethyl acetate and methyl-substituted cyclohexanones, but free acid is a poor substrate. This Pseudomonas putida (Arthrobacter siderocapsulatus) protein is 2-oxo-Delta(3)-4,5,5-trimethylcyclopentenylacetyl-CoA monooxygenase (otemo).